The following is a 1014-amino-acid chain: EMILIN-1-A (1014 aa).

An N-terminal signal peptide occupies residues 1 to 27 (MALYFVYLSTLLALILLGDNWAAGTYA). The 76-residue stretch at 53 to 128 (HRNWCAYVVT…HGYSGDDCSD (76 aa)) folds into the EMI domain. Disulfide bonds link Cys57-Cys118, Cys84-Cys89, and Cys117-Cys126. Disordered regions lie at residues 125–150 (DCSD…SDSD) and 811–869 (QDFT…ANVP). Basic and acidic residues predominate over residues 134–150 (HDSRARPTGEEGRSDSD). Residues 145–179 (GRSDSDRIRQLEEQIQSLNKNLHNLQKKIYEESQR) adopt a coiled-coil conformation. The Collagen-like domain occupies 815-865 (GPPGLPGPQGEKGSKGPPGPRGPLGKEGPQGRVGPVGPPGLRGEQGPPGKD). Low complexity predominate over residues 840–856 (KEGPQGRVGPVGPPGLR). One can recognise a C1q domain in the interval 866 to 1012 (ANVPRLSFSA…GMLLYEESED (147 aa)).

The protein resides in the secreted. The protein localises to the extracellular space. It is found in the extracellular matrix. Its function is as follows. May be responsible for anchoring smooth muscle cells to elastic fibers, and may be involved not only in the formation of the elastic fiber, but also in the processes that regulate vessel assembly. Has cell adhesive capacity. In Danio rerio (Zebrafish), this protein is EMILIN-1-A.